A 226-amino-acid polypeptide reads, in one-letter code: Ribonuclease HII (226 aa).

In terms of domain architecture, RNase H type-2 spans 29–220; the sequence is GPVAGVDEAG…VAALLHRVDN (192 aa). A divalent metal cation contacts are provided by D35, E36, and D129.

The protein belongs to the RNase HII family. It depends on Mn(2+) as a cofactor. Requires Mg(2+) as cofactor.

It localises to the cytoplasm. It catalyses the reaction Endonucleolytic cleavage to 5'-phosphomonoester.. Functionally, endonuclease that specifically degrades the RNA of RNA-DNA hybrids. This Rhodococcus opacus (strain B4) protein is Ribonuclease HII.